A 1274-amino-acid polypeptide reads, in one-letter code: MAEPAARHLSLPSGLLELCALLGASQDSLRGLEQIAQKRGVKSASSLVPEVLSVFVPPFTTKEDGQVPGASCALGKGRRRSFRKKREKPRMEPWKSHPGDSKGPDSEDVTIPGGVDLLALPQLCFPGCVCVASEPKEDYIHFLVLTDVCGNRTYGVVAQYYRPLHDEYCFYNGKSHWEPSVISARCFVPFAVCVVSRFPYYNSLKDCLSCLLTHLKLCKDFEVDNHIKDFAARLSLIPSPPPGPLHLIFNMKPLQVVFPSRADPESPIVDLDLHLPLLCFRPEKVLQILTCILTEQRIVFFSSDWALLTLMAECFVAYLHPLQWQHTFVPILSGQMLDFVMAPTSFLMGCHLDHFEEVRKEADGLVLIDIDHGSVTCSKSSDDNIDIPDVPLLLAQTFIQRVQSLQLHPDLHLAHLSASTDLNEGRARRRAWQQTLNCKIQHITLQLLVGIFREVKNHLNYEHRVFNSEEFLKTRAAGDQQFYKQVLDTYMFHSFLKARLNGRMDAFARMDLDTQSEEDRIDRMLISPRRPTVEKMASRKASPLHITHRRMVVSMPNLQDISLPELPPRNSSLRIMDTSNCRSSSPVLKVTPKSTYMFKIPDIHFPLESQCVQAYYTDFVTLLSKAMALLGPGDSLLLARYFYLRGLLHLMQGQLLSALLDFQNLYKTDIGIFPADLVKRTVESMSASERAQAERTPELRRLITEVFDKHGEAPKADDAVKNFELPKKHMQLNDFVKRVQESGIVKDAVIIHRLFDALTFGHEKQIDPETFRDFYTCWKETEAEAQEVSLPALLMEHLDKNECVYKLSSSVKTNRGVGKIAMTQKRLFLLTEGRPGYVEIATFRNIEEVKNSTVAFLLLRIPTLKIKTVAKKEVFEANLKSECDLWHLMVKEMWAGKQLADDHKDPQYVQQALTNVLLMDAVVGTLQSPSAIHAASKLAYFDNMKKKSPMAVPKTTSETLKHKINPSAGETAPQAIEVLLYTPGRLDPAEKVEDAHPKLWCALNEGKVVVFDASSWTVHQHCFKVGSSKVNCMVMAEHNQVWVGSEDSVIYIINVHSMSCNKQLTDHRSPVTGLAVHNGKKPSEIYSCSLDGTVIAWNVSTLRVISRFQLSYGDLLSISLHNDRIWCCTVHKILVVTPQGFVRQELKHPKDASFLAFQLLPEEQQLWAASTGVSELYMWSLKDLDQPPQKTYLQDCSEVTCMIRVKRQIWVGGRGLSQGKTRGKIYVMDVEKVTVEKELVAHLDTVRTLCSAEDRYVLSGAGQEEGKIAIWKVE.

The interval 65 to 108 is disordered; sequence GQVPGASCALGKGRRRSFRKKREKPRMEPWKSHPGDSKGPDSED. In terms of domain architecture, uDENN spans 75 to 245; it reads GKGRRRSFRK…LIPSPPPGPL (171 aa). Basic residues predominate over residues 76 to 88; that stretch reads KGRRRSFRKKREK. Positions 89 to 105 are enriched in basic and acidic residues; it reads PRMEPWKSHPGDSKGPD. A cDENN domain is found at 268–400; sequence IVDLDLHLPL…PLLLAQTFIQ (133 aa). The dDENN domain maps to 402–506; that stretch reads VQSLQLHPDL…KARLNGRMDA (105 aa). The segment at 520–970 is linker; the sequence is RIDRMLISPR…KHKINPSAGE (451 aa). Residues serine 554 and serine 572 each carry the phosphoserine; by ULK1 modification. Residue tyrosine 940 is modified to Phosphotyrosine. WD repeat units follow at residues 975–1013, 1019–1055, 1059–1099, 1103–1140, 1146–1181, 1186–1228, and 1234–1273; these read AIEV…VFDA, HQHC…IINV, SCNK…AWNV, RVIS…TPQG, LKHP…MWSL, QPPQ…IYVM, and TVEK…IWKV.

As to quaternary structure, forms oligomers. Interacts with 6 of the 7 known isoforms of 14-3-3 proteins.

It localises to the cytoplasm. Functionally, guanine nucleotide exchange factor (GEF) activating Rab12. Promotes the exchange of GDP to GTP, converting inactive GDP-bound Rab12 into its active GTP-bound form. Regulates autophagy in response to starvation through Rab12 activation. Starvation leads to ULK1/2-dependent phosphorylation of Ser-554 and Ser-572, which in turn allows recruitment of 14-3-3 adapter proteins and leads to up-regulation of GEF activity towards Rab12. Also plays a role in protein transport from recycling endosomes to lysosomes, regulating, for instance, the degradation of the transferrin receptor and of the amino acid transporter PAT4. Starvation also induces phosphorylation at Tyr-940, which leads to up-regulated GEF activity and initiates autophagy. This chain is DENN domain-containing protein 3 (Dennd3), found in Mus musculus (Mouse).